The chain runs to 601 residues: Zinc finger CCCH domain-containing protein 33 (601 aa).

ANK repeat units follow at residues 71–101 (ERRT…EAAR) and 106–138 (DGAT…SVDA). Low complexity predominate over residues 167-180 (PAVSPSSSPKKSAS). Positions 167–203 (PAVSPSSSPKKSASPPSPPPPQEAKKEYPPDLTLPDL) are disordered. C3H1-type zinc fingers lie at residues 252-280 (SYSC…HGVF) and 288-312 (QYRT…HKPD).

In Oryza sativa subsp. japonica (Rice), this protein is Zinc finger CCCH domain-containing protein 33.